Consider the following 138-residue polypeptide: Nucleoside diphosphate kinase (138 aa).

ATP is bound by residues Lys-9, Phe-57, Arg-85, Thr-91, Arg-102, and Asn-112. The active-site Pros-phosphohistidine intermediate is His-115.

It belongs to the NDK family. Homotetramer. It depends on Mg(2+) as a cofactor.

It localises to the cytoplasm. It carries out the reaction a 2'-deoxyribonucleoside 5'-diphosphate + ATP = a 2'-deoxyribonucleoside 5'-triphosphate + ADP. The enzyme catalyses a ribonucleoside 5'-diphosphate + ATP = a ribonucleoside 5'-triphosphate + ADP. Major role in the synthesis of nucleoside triphosphates other than ATP. The ATP gamma phosphate is transferred to the NDP beta phosphate via a ping-pong mechanism, using a phosphorylated active-site intermediate. The chain is Nucleoside diphosphate kinase from Trichlorobacter lovleyi (strain ATCC BAA-1151 / DSM 17278 / SZ) (Geobacter lovleyi).